A 168-amino-acid chain; its full sequence is Probable chorismate pyruvate-lyase (168 aa).

Substrate contacts are provided by Arg-75, Ile-114, and Glu-155.

The protein belongs to the UbiC family.

Its subcellular location is the cytoplasm. The catalysed reaction is chorismate = 4-hydroxybenzoate + pyruvate. It participates in cofactor biosynthesis; ubiquinone biosynthesis. In terms of biological role, removes the pyruvyl group from chorismate, with concomitant aromatization of the ring, to provide 4-hydroxybenzoate (4HB) for the ubiquinone pathway. This is Probable chorismate pyruvate-lyase from Psychrobacter cryohalolentis (strain ATCC BAA-1226 / DSM 17306 / VKM B-2378 / K5).